We begin with the raw amino-acid sequence, 223 residues long: Probable transaldolase (223 aa).

Lys91 (schiff-base intermediate with substrate) is an active-site residue.

It belongs to the transaldolase family. Type 3B subfamily.

The protein resides in the cytoplasm. The enzyme catalyses D-sedoheptulose 7-phosphate + D-glyceraldehyde 3-phosphate = D-erythrose 4-phosphate + beta-D-fructose 6-phosphate. It participates in carbohydrate degradation; pentose phosphate pathway; D-glyceraldehyde 3-phosphate and beta-D-fructose 6-phosphate from D-ribose 5-phosphate and D-xylulose 5-phosphate (non-oxidative stage): step 2/3. Functionally, transaldolase is important for the balance of metabolites in the pentose-phosphate pathway. The polypeptide is Probable transaldolase (Chlorobium phaeobacteroides (strain BS1)).